Here is a 96-residue protein sequence, read N- to C-terminus: Small ribosomal subunit protein bS6 (96 aa).

This sequence belongs to the bacterial ribosomal protein bS6 family.

Binds together with bS18 to 16S ribosomal RNA. This Bacillus thuringiensis subsp. konkukian (strain 97-27) protein is Small ribosomal subunit protein bS6.